Consider the following 112-residue polypeptide: Iron-sulfur cluster insertion protein ErpA (112 aa).

Residues C40, C104, and C106 each coordinate iron-sulfur cluster.

It belongs to the HesB/IscA family. As to quaternary structure, homodimer. It depends on iron-sulfur cluster as a cofactor.

Required for insertion of 4Fe-4S clusters for at least IspG. This chain is Iron-sulfur cluster insertion protein ErpA, found in Pseudoalteromonas translucida (strain TAC 125).